Here is a 280-residue protein sequence, read N- to C-terminus: Energy-coupling factor transporter ATP-binding protein EcfA1 (280 aa).

The ABC transporter domain maps to 6-241 (LRTENISFQY…SHMLQEIGLD (236 aa)). ATP is bound at residue 40 to 47 (GQNGSGKS).

This sequence belongs to the ABC transporter superfamily. Energy-coupling factor EcfA family. As to quaternary structure, forms a stable energy-coupling factor (ECF) transporter complex composed of 2 membrane-embedded substrate-binding proteins (S component), 2 ATP-binding proteins (A component) and 2 transmembrane proteins (T component).

It localises to the cell membrane. ATP-binding (A) component of a common energy-coupling factor (ECF) ABC-transporter complex. Unlike classic ABC transporters this ECF transporter provides the energy necessary to transport a number of different substrates. This Bacillus cereus (strain ATCC 10987 / NRS 248) protein is Energy-coupling factor transporter ATP-binding protein EcfA1.